A 333-amino-acid polypeptide reads, in one-letter code: Glycerol-3-phosphate dehydrogenase [NAD(P)+] (333 aa).

Positions 13, 14, 34, and 108 each coordinate NADPH. Lys-108, Gly-137, and Thr-139 together coordinate sn-glycerol 3-phosphate. Ala-141 is a binding site for NADPH. 5 residues coordinate sn-glycerol 3-phosphate: Lys-193, Asp-246, Ser-256, Arg-257, and Asn-258. The Proton acceptor role is filled by Lys-193. Arg-257 is an NADPH binding site. NADPH is bound at residue Glu-283.

The protein belongs to the NAD-dependent glycerol-3-phosphate dehydrogenase family.

The protein resides in the cytoplasm. It carries out the reaction sn-glycerol 3-phosphate + NAD(+) = dihydroxyacetone phosphate + NADH + H(+). The catalysed reaction is sn-glycerol 3-phosphate + NADP(+) = dihydroxyacetone phosphate + NADPH + H(+). It functions in the pathway membrane lipid metabolism; glycerophospholipid metabolism. In terms of biological role, catalyzes the reduction of the glycolytic intermediate dihydroxyacetone phosphate (DHAP) to sn-glycerol 3-phosphate (G3P), the key precursor for phospholipid synthesis. The polypeptide is Glycerol-3-phosphate dehydrogenase [NAD(P)+] (Idiomarina loihiensis (strain ATCC BAA-735 / DSM 15497 / L2-TR)).